Consider the following 81-residue polypeptide: Cytochrome c oxidase subunit 7B2, mitochondrial (81 aa).

A mitochondrion-targeting transit peptide spans 1 to 25 (MMFPLARNALSSLKIQSILQSMARH). Residues 26 to 33 (SHVKHSPD) are Mitochondrial matrix-facing. Residues 34–60 (FHDKYGNAVLASGTAFCVATWVFTATQ) form a helical membrane-spanning segment. The Mitochondrial intermembrane portion of the chain corresponds to 61–81 (IGIEWNLSPVGRVTPKEWKHQ).

The protein belongs to the cytochrome c oxidase VIIb family. As to quaternary structure, component of the cytochrome c oxidase (complex IV, CIV), a multisubunit enzyme composed of 14 subunits. The complex is composed of a catalytic core of 3 subunits MT-CO1, MT-CO2 and MT-CO3, encoded in the mitochondrial DNA, and 11 supernumerary subunits COX4I, COX5A, COX5B, COX6A, COX6B, COX6C, COX7A, COX7B, COX7C, COX8 and NDUFA4, which are encoded in the nuclear genome. The complex exists as a monomer or a dimer and forms supercomplexes (SCs) in the inner mitochondrial membrane with NADH-ubiquinone oxidoreductase (complex I, CI) and ubiquinol-cytochrome c oxidoreductase (cytochrome b-c1 complex, complex III, CIII), resulting in different assemblies (supercomplex SCI(1)III(2)IV(1) and megacomplex MCI(2)III(2)IV(2)).

Its subcellular location is the mitochondrion inner membrane. It participates in energy metabolism; oxidative phosphorylation. In terms of biological role, component of the cytochrome c oxidase, the last enzyme in the mitochondrial electron transport chain which drives oxidative phosphorylation. The respiratory chain contains 3 multisubunit complexes succinate dehydrogenase (complex II, CII), ubiquinol-cytochrome c oxidoreductase (cytochrome b-c1 complex, complex III, CIII) and cytochrome c oxidase (complex IV, CIV), that cooperate to transfer electrons derived from NADH and succinate to molecular oxygen, creating an electrochemical gradient over the inner membrane that drives transmembrane transport and the ATP synthase. Cytochrome c oxidase is the component of the respiratory chain that catalyzes the reduction of oxygen to water. Electrons originating from reduced cytochrome c in the intermembrane space (IMS) are transferred via the dinuclear copper A center (CU(A)) of subunit 2 and heme A of subunit 1 to the active site in subunit 1, a binuclear center (BNC) formed by heme A3 and copper B (CU(B)). The BNC reduces molecular oxygen to 2 water molecules using 4 electrons from cytochrome c in the IMS and 4 protons from the mitochondrial matrix. This Homo sapiens (Human) protein is Cytochrome c oxidase subunit 7B2, mitochondrial (COX7B2).